The chain runs to 355 residues: Holliday junction branch migration complex subunit RuvB (355 aa).

The segment at 4–190 is large ATPase domain (RuvB-L); the sequence is TDKLAAERII…FGIVARLEFY (187 aa). ATP-binding positions include Leu-29, Arg-30, Gly-71, Lys-74, Thr-75, Thr-76, 137–139, Arg-180, Tyr-190, and Arg-227; that span reads EDY. Thr-75 contacts Mg(2+). Residues 191-261 form a small ATPAse domain (RuvB-S) region; that stretch reads DAEQLSRIVR…VADAALAMLD (71 aa). Residues 264–355 are head domain (RuvB-H); that stretch reads PVGFDLMDRK…GSMWNTPDGA (92 aa). Arg-300, Arg-319, and Arg-324 together coordinate DNA.

It belongs to the RuvB family. In terms of assembly, homohexamer. Forms an RuvA(8)-RuvB(12)-Holliday junction (HJ) complex. HJ DNA is sandwiched between 2 RuvA tetramers; dsDNA enters through RuvA and exits via RuvB. An RuvB hexamer assembles on each DNA strand where it exits the tetramer. Each RuvB hexamer is contacted by two RuvA subunits (via domain III) on 2 adjacent RuvB subunits; this complex drives branch migration. In the full resolvosome a probable DNA-RuvA(4)-RuvB(12)-RuvC(2) complex forms which resolves the HJ.

It is found in the cytoplasm. The catalysed reaction is ATP + H2O = ADP + phosphate + H(+). In terms of biological role, the RuvA-RuvB-RuvC complex processes Holliday junction (HJ) DNA during genetic recombination and DNA repair, while the RuvA-RuvB complex plays an important role in the rescue of blocked DNA replication forks via replication fork reversal (RFR). RuvA specifically binds to HJ cruciform DNA, conferring on it an open structure. The RuvB hexamer acts as an ATP-dependent pump, pulling dsDNA into and through the RuvAB complex. RuvB forms 2 homohexamers on either side of HJ DNA bound by 1 or 2 RuvA tetramers; 4 subunits per hexamer contact DNA at a time. Coordinated motions by a converter formed by DNA-disengaged RuvB subunits stimulates ATP hydrolysis and nucleotide exchange. Immobilization of the converter enables RuvB to convert the ATP-contained energy into a lever motion, pulling 2 nucleotides of DNA out of the RuvA tetramer per ATP hydrolyzed, thus driving DNA branch migration. The RuvB motors rotate together with the DNA substrate, which together with the progressing nucleotide cycle form the mechanistic basis for DNA recombination by continuous HJ branch migration. Branch migration allows RuvC to scan DNA until it finds its consensus sequence, where it cleaves and resolves cruciform DNA. The polypeptide is Holliday junction branch migration complex subunit RuvB (Burkholderia vietnamiensis (strain G4 / LMG 22486) (Burkholderia cepacia (strain R1808))).